Consider the following 104-residue polypeptide: Putative heat shock protein PS1 (104 aa).

N-linked (GlcNAc...) asparagine glycosylation is found at N11 and N18. N18 is an ATP binding site.

This sequence belongs to the heat shock protein 90 family. In terms of assembly, homodimer.

The protein localises to the cytoplasm. Functionally, putative molecular chaperone that may promote the maturation, structural maintenance and proper regulation of specific target proteins. The protein is Putative heat shock protein PS1 of Pinus strobus (Eastern white pine).